Reading from the N-terminus, the 95-residue chain is Small ribosomal subunit protein bS6 (95 aa).

The protein belongs to the bacterial ribosomal protein bS6 family.

Binds together with bS18 to 16S ribosomal RNA. In Bacillus licheniformis (strain ATCC 14580 / DSM 13 / JCM 2505 / CCUG 7422 / NBRC 12200 / NCIMB 9375 / NCTC 10341 / NRRL NRS-1264 / Gibson 46), this protein is Small ribosomal subunit protein bS6.